A 199-amino-acid polypeptide reads, in one-letter code: MSDFQKSFSESTSSIKFDEKYIDTSVQPNDIGVAEQWAVKTVADPCVGNLATPVNSGYFTKAFINNLPFYREGISPNFRGLETGAAFGYLLYGPFTMTGPLRNSEFALTAGLLATIGAVHILTALFVLYNAPGKAPNVQPPDATVNNPPKDLFTRAGWADFTSGFWLGGCGGAVFAWLLVGTLHLDSIMPIIKNIWTAG.

A run of 2 helical transmembrane segments spans residues 108–128 (LTAG…LFVL) and 165–185 (FWLG…TLHL).

Belongs to the PsaL family.

Its subcellular location is the cellular thylakoid membrane. In Prochlorococcus marinus (strain MIT 9301), this protein is Photosystem I reaction center subunit XI.